We begin with the raw amino-acid sequence, 331 residues long: Probable serine hydrolase (331 aa).

The interval Met-1 to Glu-28 is disordered. The segment covering Ala-7–Ala-17 has biased composition (low complexity). Residues Pro-63–Ile-163 enclose the AB hydrolase-1 domain. Ser-138 is a catalytic residue.

The protein belongs to the AB hydrolase superfamily. In terms of tissue distribution, ubiquitously expressed before embryonic stage 11. At stage 11, expression is concentrated in the foregut and posterior midgut. By stage 15, in gastric caeca, pharynx, posterior spiracles and anterior edge of midgut. At the end of embryogenesis, expression is confined to gastric caeca. During third instar larvae, expressed at low levels in gastric caeca, midgut and hindgut and high level in fat body.

In terms of biological role, may have a role in detoxification and digestion during embryogenesis and larval development. The polypeptide is Probable serine hydrolase (kraken) (Drosophila melanogaster (Fruit fly)).